The chain runs to 473 residues: MKTLYSLRRFYHVETLFNGTLALAGRDQETTGFAWWAGNARLINLSGKLLGAHVAHAGLIVFWAGAMNLFEVAHFVPEKPMYEQGLILLPHLATLGWGVGPGGEVIDTFPYFVSGVLHLISSAVLGFGGIYHALLGPETLEESFPFFGYVWKDRNKMTTILGIHLILLGIGAFLLVFKALYFGGVYDTWAPGGGDVRKITNLTLSPSVIFGYLLKSPFGGEGWIVSVDDLEDIIGGHVWLGSICIFGGIWHILTKPFAWARRALVWSGEAYLSYSLAALSVCGFIACCFVWFNNTAYPSEFYGPTGPEASQAQAFTFLVRDQRLGANVGSAQGPTGLGKYLMRSPTGEVIFGGETMRFWDLRAPWLEPLRGPNGLDLSRLKKDIQPWQERRSAEYMTHAPLGSLNSVGGVATEINAVNYVSPRSWLSTSHFVLGFFLFVGHLWHAGRARAAAAGFEKGIDRDFEPVLSMTPLN.

Positions 1–14 (MKTLYSLRRFYHVE) are excised as a propeptide. T15 is subject to N-acetylthreonine. T15 carries the phosphothreonine modification. 5 consecutive transmembrane segments (helical) span residues 69–93 (LFEV…PHLA), 134–155 (LLGP…KDRN), 178–200 (KALY…RKIT), 255–275 (KPFA…LSYS), and 291–312 (WFNN…ASQA). Residue E367 coordinates [CaMn4O5] cluster. A helical transmembrane segment spans residues 447–471 (RARAAAAGFEKGIDRDFEPVLSMTP).

This sequence belongs to the PsbB/PsbC family. PsbC subfamily. PSII is composed of 1 copy each of membrane proteins PsbA, PsbB, PsbC, PsbD, PsbE, PsbF, PsbH, PsbI, PsbJ, PsbK, PsbL, PsbM, PsbT, PsbX, PsbY, PsbZ, Psb30/Ycf12, at least 3 peripheral proteins of the oxygen-evolving complex and a large number of cofactors. It forms dimeric complexes. The cofactor is Binds multiple chlorophylls and provides some of the ligands for the Ca-4Mn-5O cluster of the oxygen-evolving complex. It may also provide a ligand for a Cl- that is required for oxygen evolution. PSII binds additional chlorophylls, carotenoids and specific lipids..

It localises to the plastid. Its subcellular location is the chloroplast thylakoid membrane. In terms of biological role, one of the components of the core complex of photosystem II (PSII). It binds chlorophyll and helps catalyze the primary light-induced photochemical processes of PSII. PSII is a light-driven water:plastoquinone oxidoreductase, using light energy to abstract electrons from H(2)O, generating O(2) and a proton gradient subsequently used for ATP formation. This is Photosystem II CP43 reaction center protein from Arabis hirsuta (Hairy rock-cress).